Reading from the N-terminus, the 208-residue chain is Ubiquitin-conjugating enzyme E2 S (208 aa).

A UBC core domain is found at 14–160 (QTIRQVMREL…ARMMTEIHAQ (147 aa)). Catalysis depends on cysteine 98, which acts as the Glycyl thioester intermediate. The tract at residues 159–208 (AQPAKCASTTSDAKDDDGPSTKKHAGLDKKLQDKKKEKLLKEKKRMLKRL) is disordered. Residues 170 to 198 (DAKDDDGPSTKKHAGLDKKLQDKKKEKLL) are compositionally biased toward basic and acidic residues. Positions 199–208 (KEKKRMLKRL) are enriched in basic residues.

The protein belongs to the ubiquitin-conjugating enzyme family.

The enzyme catalyses S-ubiquitinyl-[E1 ubiquitin-activating enzyme]-L-cysteine + [E2 ubiquitin-conjugating enzyme]-L-cysteine = [E1 ubiquitin-activating enzyme]-L-cysteine + S-ubiquitinyl-[E2 ubiquitin-conjugating enzyme]-L-cysteine.. It functions in the pathway protein modification; protein ubiquitination. In terms of biological role, catalyzes the covalent attachment of ubiquitin to other proteins. Acts as an essential factor of the anaphase promoting complex/cyclosome (APC/C), a cell cycle-regulated ubiquitin ligase that controls progression through mitosis. Acts by specifically elongating polyubiquitin chains initiated by the E2 enzyme vih/UbcH10 on APC/C substrates, enhancing the degradation of APC/C substrates by the proteasome and promoting mitotic exit. This is Ubiquitin-conjugating enzyme E2 S from Drosophila willistoni (Fruit fly).